The following is a 518-amino-acid chain: Lycopene epsilon cyclase, chloroplastic (518 aa).

100–128 (LIVIGCGPAGMSLAAEAGKRGLSVGLIGP) contacts NAD(+). The next 2 membrane-spanning stretches (helical) occupy residues 435–455 (FFLFGLALILQLDIDGIRIFF) and 469–489 (FLGSTLSSAGLIWFAFYMFAI).

The protein belongs to the lycopene cyclase family. As to expression, expressed in leaves and roots. Detected in flower buds and lips.

It is found in the plastid. It localises to the chloroplast membrane. The enzyme catalyses a carotenoid psi-end group = a carotenoid epsilon-end group. The protein operates within carotenoid biosynthesis; alpha-zeacarotene biosynthesis. Its pathway is carotenoid biosynthesis; delta-carotene biosynthesis. Functionally, catalyzes the single epsilon-cyclization reaction which converts lycopene to delta-carotene and neurosporene to alpha-zeacarotene. Required for lutein biosynthesis. The chain is Lycopene epsilon cyclase, chloroplastic from Oncidium hybrid cultivar (Orchid).